The chain runs to 270 residues: Putative pyruvate, phosphate dikinase regulatory protein (270 aa).

ADP is bound at residue 148 to 155 (GISRTSKT).

It belongs to the pyruvate, phosphate/water dikinase regulatory protein family. PDRP subfamily.

It catalyses the reaction N(tele)-phospho-L-histidyl/L-threonyl-[pyruvate, phosphate dikinase] + ADP = N(tele)-phospho-L-histidyl/O-phospho-L-threonyl-[pyruvate, phosphate dikinase] + AMP + H(+). The catalysed reaction is N(tele)-phospho-L-histidyl/O-phospho-L-threonyl-[pyruvate, phosphate dikinase] + phosphate + H(+) = N(tele)-phospho-L-histidyl/L-threonyl-[pyruvate, phosphate dikinase] + diphosphate. Its function is as follows. Bifunctional serine/threonine kinase and phosphorylase involved in the regulation of the pyruvate, phosphate dikinase (PPDK) by catalyzing its phosphorylation/dephosphorylation. The protein is Putative pyruvate, phosphate dikinase regulatory protein of Bacillus mycoides (strain KBAB4) (Bacillus weihenstephanensis).